The chain runs to 278 residues: Small ribosomal subunit biogenesis GTPase RsgA (278 aa).

The CP-type G domain maps to 62–218; sequence KNELTRPRVA…ICDTPGFNVI (157 aa). Residues 112–115 and 162–170 each bind GTP; these read TKTD and GQSGVGKSS. Zn(2+) is bound by residues Cys241, Cys246, His248, and Cys254.

This sequence belongs to the TRAFAC class YlqF/YawG GTPase family. RsgA subfamily. In terms of assembly, monomer. Associates with 30S ribosomal subunit, binds 16S rRNA. Zn(2+) is required as a cofactor.

Its subcellular location is the cytoplasm. Its function is as follows. One of several proteins that assist in the late maturation steps of the functional core of the 30S ribosomal subunit. Helps release RbfA from mature subunits. May play a role in the assembly of ribosomal proteins into the subunit. Circularly permuted GTPase that catalyzes slow GTP hydrolysis, GTPase activity is stimulated by the 30S ribosomal subunit. This Mycoplasma genitalium (strain ATCC 33530 / DSM 19775 / NCTC 10195 / G37) (Mycoplasmoides genitalium) protein is Small ribosomal subunit biogenesis GTPase RsgA.